We begin with the raw amino-acid sequence, 65 residues long: Large ribosomal subunit protein bL33 (65 aa).

A disordered region spans residues 20 to 42 (APASEKRSPGVSRYTTEKNRRNT).

This sequence belongs to the bacterial ribosomal protein bL33 family.

The sequence is that of Large ribosomal subunit protein bL33 from Prochlorococcus marinus (strain SARG / CCMP1375 / SS120).